The sequence spans 83 residues: Small ribosomal subunit protein eS21 (83 aa).

The protein belongs to the eukaryotic ribosomal protein eS21 family. In terms of assembly, component of the 40S small ribosomal subunit.

The protein localises to the cytoplasm. The protein resides in the cytosol. It is found in the rough endoplasmic reticulum. The protein is Small ribosomal subunit protein eS21 (RpS21) of Biphyllus lunatus (Beetle).